Reading from the N-terminus, the 84-residue chain is Venom protein SynTx (84 aa).

The signal sequence occupies residues 1–19 (TLLLTLVVVTIVCLDLGYT). 4 disulfides stabilise this stretch: Cys22/Cys43, Cys36/Cys61, Cys65/Cys76, and Cys77/Cys82.

The protein belongs to the three-finger toxin family. Short-chain subfamily. Aminergic toxin sub-subfamily. As to quaternary structure, homodimer; disulfide-linked. In terms of tissue distribution, expressed by the venom gland.

Its subcellular location is the secreted. In terms of biological role, this protein shows a synergetic toxic effect in that it enhances the toxicity of other toxins. This Dendroaspis jamesoni jamesoni (Jameson's mamba) protein is Venom protein SynTx.